Consider the following 200-residue polypeptide: Protein GrpE (200 aa).

Over residues 1-27 the composition is skewed to basic and acidic residues; the sequence is MTKQEKAENQEKPTEETVEETPKKETP. The tract at residues 1–50 is disordered; that stretch reads MTKQEKAENQEKPTEETVEETPKKETPFEPVMEADEVEETTEAQAPVEEA. Positions 32–41 are enriched in acidic residues; the sequence is MEADEVEETT.

The protein belongs to the GrpE family. As to quaternary structure, homodimer.

It is found in the cytoplasm. Participates actively in the response to hyperosmotic and heat shock by preventing the aggregation of stress-denatured proteins, in association with DnaK and GrpE. It is the nucleotide exchange factor for DnaK and may function as a thermosensor. Unfolded proteins bind initially to DnaJ; upon interaction with the DnaJ-bound protein, DnaK hydrolyzes its bound ATP, resulting in the formation of a stable complex. GrpE releases ADP from DnaK; ATP binding to DnaK triggers the release of the substrate protein, thus completing the reaction cycle. Several rounds of ATP-dependent interactions between DnaJ, DnaK and GrpE are required for fully efficient folding. This is Protein GrpE from Latilactobacillus sakei subsp. sakei (strain 23K) (Lactobacillus sakei subsp. sakei).